The chain runs to 138 residues: Translation initiation factor 2 subunit beta (138 aa).

The protein belongs to the eIF-2-beta/eIF-5 family. As to quaternary structure, heterotrimer composed of an alpha, a beta and a gamma chain.

Functionally, eIF-2 functions in the early steps of protein synthesis by forming a ternary complex with GTP and initiator tRNA. The chain is Translation initiation factor 2 subunit beta from Methanococcus vannielii (strain ATCC 35089 / DSM 1224 / JCM 13029 / OCM 148 / SB).